The chain runs to 327 residues: MSHLAELVASAKAAISQASDVAALDNVRVEYLGKKGHLTLQMTTLRELPPEERPAAGAVINEAKEQVQQALNARKAELESAALNARLAAETIDVSLPGRRIENGGLHPVTRTIDRIESFFGELGFTVATGPEIEDDYHNFDALNIPGHHPARADHDTFWFDTTRLLRTQTSGVQIRTMKAQQPPIRIIAPGRVYRNDYDQTHTPMFHQMEGLIVDTNISFTNLKGTLHDFLRNFFEEDLQIRFRPSYFPFTEPSAEVDVMGKNGKWLEVLGCGMVHPNVLRNVGIDPEVYSGFAFGMGMERLTMLRYGVTDLRSFFENDLRFLKQFK.

Residue E252 coordinates Mg(2+).

The protein belongs to the class-II aminoacyl-tRNA synthetase family. Phe-tRNA synthetase alpha subunit type 1 subfamily. In terms of assembly, tetramer of two alpha and two beta subunits. Mg(2+) is required as a cofactor.

It is found in the cytoplasm. The catalysed reaction is tRNA(Phe) + L-phenylalanine + ATP = L-phenylalanyl-tRNA(Phe) + AMP + diphosphate + H(+). The sequence is that of Phenylalanine--tRNA ligase alpha subunit from Escherichia coli O139:H28 (strain E24377A / ETEC).